Consider the following 251-residue polypeptide: Small ribosomal subunit protein uS2 (251 aa).

It belongs to the universal ribosomal protein uS2 family.

In Nitrosomonas europaea (strain ATCC 19718 / CIP 103999 / KCTC 2705 / NBRC 14298), this protein is Small ribosomal subunit protein uS2.